We begin with the raw amino-acid sequence, 385 residues long: Glucose-fructose oxidoreductase domain-containing protein 2 (385 aa).

Positions 1-25 (MKMLPGVGVFGTGSSARVLVPLLRA) are cleaved as a signal peptide.

Belongs to the Gfo/Idh/MocA family.

Its subcellular location is the secreted. The protein resides in the extracellular space. The protein localises to the extracellular matrix. Functionally, promotes matrix assembly. In Bos taurus (Bovine), this protein is Glucose-fructose oxidoreductase domain-containing protein 2 (GFOD2).